The sequence spans 186 residues: Ribosome-recycling factor (186 aa).

The protein belongs to the RRF family.

The protein localises to the cytoplasm. Its function is as follows. Responsible for the release of ribosomes from messenger RNA at the termination of protein biosynthesis. May increase the efficiency of translation by recycling ribosomes from one round of translation to another. The polypeptide is Ribosome-recycling factor (Maricaulis maris (strain MCS10) (Caulobacter maris)).